Consider the following 1058-residue polypeptide: Carbamoyl phosphate synthase large chain (1058 aa).

The tract at residues Met-1–Glu-401 is carboxyphosphate synthetic domain. ATP contacts are provided by Arg-129, Arg-169, Gly-175, Gly-176, Arg-208, Ile-210, Glu-215, Gly-241, Ile-242, His-243, Gln-284, and Glu-298. The 195-residue stretch at Lys-133–Val-327 folds into the ATP-grasp 1 domain. Mg(2+)-binding residues include Gln-284, Glu-298, and Asn-300. Mn(2+)-binding residues include Gln-284, Glu-298, and Asn-300. An oligomerization domain region spans residues Ile-402–Ser-546. The carbamoyl phosphate synthetic domain stretch occupies residues Ile-547–Tyr-929. Residues Glu-671–Leu-861 form the ATP-grasp 2 domain. Residues Arg-707, Ser-746, Ile-748, Glu-752, Gly-777, Val-778, His-779, Ser-780, Gln-820, and Glu-832 each coordinate ATP. Residues Gln-820, Glu-832, and Asn-834 each contribute to the Mg(2+) site. Mn(2+) contacts are provided by Gln-820, Glu-832, and Asn-834. One can recognise an MGS-like domain in the interval Leu-930–Ile-1058. The segment at Leu-930–Ile-1058 is allosteric domain.

The protein belongs to the CarB family. As to quaternary structure, composed of two chains; the small (or glutamine) chain promotes the hydrolysis of glutamine to ammonia, which is used by the large (or ammonia) chain to synthesize carbamoyl phosphate. Tetramer of heterodimers (alpha,beta)4. Requires Mg(2+) as cofactor. Mn(2+) serves as cofactor.

It catalyses the reaction hydrogencarbonate + L-glutamine + 2 ATP + H2O = carbamoyl phosphate + L-glutamate + 2 ADP + phosphate + 2 H(+). It carries out the reaction hydrogencarbonate + NH4(+) + 2 ATP = carbamoyl phosphate + 2 ADP + phosphate + 2 H(+). It functions in the pathway amino-acid biosynthesis; L-arginine biosynthesis; carbamoyl phosphate from bicarbonate: step 1/1. Its pathway is pyrimidine metabolism; UMP biosynthesis via de novo pathway; (S)-dihydroorotate from bicarbonate: step 1/3. Its function is as follows. Large subunit of the glutamine-dependent carbamoyl phosphate synthetase (CPSase). CPSase catalyzes the formation of carbamoyl phosphate from the ammonia moiety of glutamine, carbonate, and phosphate donated by ATP, constituting the first step of 2 biosynthetic pathways, one leading to arginine and/or urea and the other to pyrimidine nucleotides. The large subunit (synthetase) binds the substrates ammonia (free or transferred from glutamine from the small subunit), hydrogencarbonate and ATP and carries out an ATP-coupled ligase reaction, activating hydrogencarbonate by forming carboxy phosphate which reacts with ammonia to form carbamoyl phosphate. The sequence is that of Carbamoyl phosphate synthase large chain from Streptococcus pneumoniae (strain P1031).